Reading from the N-terminus, the 391-residue chain is MSSRENPSGICKSIPKLISSFVDTFVDYSVSGIFLPQDPSSQNEILQTRFEKPERLVAIGDLHGDLEKSREAFKIAGLIDSSDRWTGGSTMVVQVGDVLDRGGEELKILYFLEKLKREAERAGGKILTMNGNHEIMNIEGDFRYVTKKGLEEFQIWADWYCLGNKMKTLCSGLDKPKDPYEGIPMSFPRMRADCFEGIRARIAALRPDGPIAKRFLTKNQTVAVVGDSVFVHGGLLAEHIEYGLERINEEVRGWINGFKGGRYAPAYCRGGNSVVWLRKFSEEMAHKCDCAALEHALSTIPGVKRMIMGHTIQDAGINGVCNDKAIRIDVGMSKGCADGLPEVLEIRRDSGVRIVTSNPLYKENLYSHVAPDSKTGLGLLVPVPKQVEVKA.

Mn(2+)-binding residues include Asp-61, His-63, Asp-97, and Asn-132. Catalysis depends on His-133, which acts as the Proton donor. The Mn(2+) site is built by His-232 and His-295.

It belongs to the metallophosphoesterase superfamily. SLP family. It depends on Mn(2+) as a cofactor. As to expression, expressed in roots and siliques (at protein level).

It localises to the cytoplasm. The protein localises to the cytosol. Functionally, shows phosphatase activity, hydrolyzing the artificial substrate para-nitrophenylphosphate (pNPP) in vitro. This is Shewanella-like protein phosphatase 2 from Arabidopsis thaliana (Mouse-ear cress).